A 634-amino-acid polypeptide reads, in one-letter code: Chaperone protein HtpG (634 aa).

The a; substrate-binding stretch occupies residues 1–344 (MSETVSHNKE…SNDLPLNVSR (344 aa)). The tract at residues 345 to 561 (EILQDNKVTQ…DFEMGTQMAK (217 aa)) is b. Residues 562 to 634 (LLEAAGQAVP…GAINKLLTKV (73 aa)) are c.

Belongs to the heat shock protein 90 family. Homodimer.

It is found in the cytoplasm. Functionally, molecular chaperone. Has ATPase activity. The polypeptide is Chaperone protein HtpG (Vibrio campbellii (strain ATCC BAA-1116)).